The chain runs to 801 residues: MSLLHIAVILPLIFALIIPILYRFFKRIHLGWFVLPVPIVIFIYMLTLIKTTMSGNTVMKTLNWMPHFGMNFDLYLDGLGLLFSLLISGIGSLVVLYSIGYLSKSEQLGNFYCYLLLFMGAMLGVVLSDNVIILYLFWELTSFSSFLLISFWRERQASIYGAQKSLIITVFGGLSLLGGIILLAIPTQSFSIQYMIQHASEIQNSPFFIFAMILIMIGAFTKSAQFPFYIWLPDAMEAPTPVSAYLHSATMVKAGLYLIARMTPIFAASQGWIWTVTLVGLITLFWASLNATKQQDLKGILAFSTVSQLGMIMAMLGIGAISYHYQGDDSKIYAAAFTAAIFHLINHATFKGALFMITGAVDHSTGTRDVKKLGGLLTIMPISFTITVITALSMAGVPPFNGFLSKESFLETTFTASKANLFSVDTLGYLFPIIGIVGSVFTFVYSIKFIMHIFFGQYKPEQLPKKAHEVSILMLLSPAILATLVIVFGLFPGILTNSIIEPATSSINHTVIDDVEFHMFHGLTPAFLSTLVIYILGILLIVTFSYWVKLLQRQPGKLTFNYWYNRSANVIPNYSEKMTNSYVTDYSRNNLVIIFGALILLTFVTVFSVPFNINFKDVSPIRIFEVCIVILLLSAAFLILFAKSRLFSIIMLSAVGYAVSVLFIFFKAPDLALTQFVVESISTALFLLCFYHLPNLNRYNEKRSFQLTNALIAGGVGLSVIIIGLIAYGNRHFESISKFYQEHVYDLAHGKNMVNVILVDFRGMDTLFESSVLGIAGLAVYTMIKLRKKRQTQGNEVKNHE.

The next 21 helical transmembrane spans lie at 4 to 25 (LHIA…YRFF), 30 to 49 (LGWF…LTLI), 79 to 101 (LGLL…SIGY), 108 to 127 (LGNF…GVVL), 131 to 153 (VIIL…SFWR), 166 to 188 (LIIT…IPTQ), 208 to 230 (FIFA…PFYI), 243 to 265 (SAYL…MTPI), 270 to 289 (QGWI…WASL), 302 to 324 (AFST…ISYH), 339 to 361 (AAIF…TGAV), 373 to 395 (LGGL…LSMA), 429 to 451 (YLFP…KFIM), 472 to 494 (ILML…FPGI), 526 to 548 (AFLS…SYWV), 589 to 611 (NNLV…SVPF), 621 to 641 (IRIF…LILF), 646 to 668 (LFSI…FFKA), 672 to 694 (ALTQ…YHLP), 707 to 729 (LTNA…IAYG), and 767 to 784 (LFES…YTMI).

It belongs to the CPA3 antiporters (TC 2.A.63) subunit A family. As to quaternary structure, may form a heterooligomeric complex that consists of seven subunits: mnhA1, mnhB1, mnhC1, mnhD1, mnhE1, mnhF1 and mnhG1.

The protein localises to the cell membrane. With respect to regulation, na(+) extrusion is completely inhibited by the H(+) conductor carbonyl cyanide m-chlorophenylhydrazone (CCCP). In terms of biological role, mnh complex is a Na(+)/H(+) antiporter involved in Na(+) excretion. The sequence is that of Na(+)/H(+) antiporter subunit A1 (mnhA1) from Staphylococcus aureus (strain MRSA252).